We begin with the raw amino-acid sequence, 157 residues long: Protein E6 (157 aa).

Zinc fingers lie at residues 43–80 (CRFC…CSGC) and 117–153 (CQYC…CRHC).

Belongs to the papillomaviridae E6 protein family. Forms homodimers. Interacts with ubiquitin-protein ligase UBE3A/E6-AP; this interaction stimulates UBE3A ubiquitin activity. Interacts with host BAK1.

The protein resides in the host cytoplasm. It is found in the host nucleus. Its function is as follows. Plays a major role in the induction and maintenance of cellular transformation. E6 associates with host UBE3A/E6-AP ubiquitin-protein ligase and modulates its activity. Protects host keratinocytes from apoptosis by mediating the degradation of host BAK1. May also inhibit host immune response. This Human papillomavirus 23 protein is Protein E6.